The chain runs to 191 residues: uncharacterized protein (191 aa).

The next 4 membrane-spanning stretches (helical) occupy residues 12 to 32, 48 to 68, 92 to 112, and 168 to 188; these read FAFL…FFTL, LVAL…LTLF, YISV…LLSL, and IFCL…SCAF.

It is found in the membrane. This is an uncharacterized protein from Saccharomyces cerevisiae (strain ATCC 204508 / S288c) (Baker's yeast).